The following is a 1020-amino-acid chain: Inner tegument protein (1020 aa).

Positions tryptophan 539–lysine 1020 are interaction with large tegument protein.

Belongs to the herpesviridae inner tegument protein family. Interacts (via C-terminus) with the large tegument protein/LTP (via N-terminus).

Its subcellular location is the virion tegument. It is found in the host cytoplasm. The protein localises to the host nucleus. It localises to the host Golgi apparatus. The protein resides in the host trans-Golgi network. Plays an essential role in cytoplasmic secondary envelopment during viral egress. Interacts with the capsid via the large tegument protein/LTP and participates in its transport to the host trans-Golgi network (TGN) where secondary envelopment occurs. Modulates tegumentation and capsid accumulation at the viral assembly complex. This Equine herpesvirus 1 (strain Ab4p) (EHV-1) protein is Inner tegument protein.